Consider the following 84-residue polypeptide: Putative defensin-like protein 101 (84 aa).

Positions 1–27 (MDITKNIVTLLLVVLFPILFYYNNVLA) are cleaved as a signal peptide. Intrachain disulfides connect cysteine 39–cysteine 81, cysteine 43–cysteine 67, cysteine 52–cysteine 79, and cysteine 56–cysteine 80.

Belongs to the DEFL family.

It localises to the secreted. This Arabidopsis thaliana (Mouse-ear cress) protein is Putative defensin-like protein 101.